We begin with the raw amino-acid sequence, 360 residues long: Cinnamyl alcohol dehydrogenase 2 (360 aa).

Residues 23–351 (GVLSPFNFSR…KADVKYRFVI (329 aa)) form the Enoyl reductase (ER) domain. Cysteine 50 is a binding site for Zn(2+). Serine 52 is a binding site for an alcohol. Serine 52 serves as a coordination point for NADP(+). Zn(2+) contacts are provided by aspartate 53, histidine 72, glutamate 73, cysteine 103, cysteine 106, cysteine 109, cysteine 117, and cysteine 166. Histidine 72 contacts an alcohol. 12 residues coordinate NADP(+): leucine 192, glycine 194, leucine 195, serine 214, threonine 215, serine 216, lysine 219, lysine 220, valine 277, alanine 279, serine 301, and arginine 348.

This sequence belongs to the zinc-containing alcohol dehydrogenase family. Class-P subfamily. Homodimer. Zn(2+) serves as cofactor. As to expression, mainly expressed in young roots and, to a lower extent, in stems and leaves.

Its subcellular location is the cytoplasm. The enzyme catalyses (E)-cinnamyl alcohol + NADP(+) = (E)-cinnamaldehyde + NADPH + H(+). Its function is as follows. Alcohol dehydrogenase that catalyzes the conversion of (E)-cinnamyl alcohol to (E)-cinnamaldehyde. This is Cinnamyl alcohol dehydrogenase 2 from Rauvolfia serpentina (Serpentine wood).